The primary structure comprises 282 residues: MDRTLESLRHIIAQVLPHRDPALVFKDLNVVSMLQEFWESKQQQKAAFPSEGVVVYESLPAPGPPFVSYVTLPGGSCFGNFQCCLSRAEARRDAAKVALINSLFNELPSRRITKEFIMESVQEAVASTSGTLDDADDPSTSVGAYHYMLESNMGKTMLEFQELMTIFQLLHWNGSLKALRETKCSRQEVISYYSQYSLDEKMRSHMALDWIMKERDSPGIVSQELRMALRQLEEARKAGQELRFYKEKKEILSLALTQICSDPDTSSPSDDQLSLTALCGYH.

The protein belongs to the LIX1 family.

The chain is Protein limb expression 1 homolog (LIX1) from Homo sapiens (Human).